We begin with the raw amino-acid sequence, 935 residues long: Progesterone receptor (935 aa).

The interval 1–164 (MTELKAKGPR…PATQRVLSPL (164 aa)) is AF3; mediates transcriptional activation. The segment at 1 to 256 (MTELKAKGPR…AAAGGGAAAV (256 aa)) is disordered. The interval 1–568 (MTELKAKGPR…YSFESLPQKI (568 aa)) is modulating, Pro-Rich. Residue Ser-20 is modified to Phosphoserine. Positions 55 to 59 (LDGLL) match the LXXL motif 1 motif. Ser-81 bears the Phosphoserine mark. Positions 115–119 (LDTLL) match the LXXL motif 2 motif. Residues Ser-130 and Ser-162 each carry the phosphoserine modification. Positions 165–305 (MSRSGGKAGD…LATTTMDFTH (141 aa)) are mediates transcriptional transrepression. The short motif at 183 to 187 (KVLPR) is the Nuclear localization signal element. Residues Ser-190 and Ser-213 each carry the phosphoserine modification. A compositionally biased stretch (acidic residues) spans 220-231 (EVEEEDGSESED). Residues 232–246 (SAGPLLKGKPRALGG) are compositionally biased toward low complexity. Ser-294 carries the post-translational modification Phosphoserine; by MAPK1. Residues 328-353 (SYDGGAGAASAFAPPRSSPSASSTPV) form a disordered region. Positions 335–350 (AASAFAPPRSSPSASS) are enriched in low complexity. Ser-345 carries the phosphoserine; by MAPK modification. Lys-388 participates in a covalent cross-link: Glycyl lysine isopeptide (Lys-Gly) (interchain with G-Cter in SUMO); alternate. Residue Lys-388 forms a Glycyl lysine isopeptide (Lys-Gly) (interchain with G-Cter in ubiquitin); alternate linkage. Ser-400 bears the Phosphoserine; by CDK2 mark. The tract at residues 415 to 452 (PDFPLGPPPPLPPRAPPSRPGEAAVTAAPAGASVSSAS) is disordered. Over residues 418-433 (PLGPPPPLPPRAPPSR) the composition is skewed to pro residues. Over residues 434 to 452 (PGEAAVTAAPAGASVSSAS) the composition is skewed to low complexity. Positions 456–548 (STLECILYKA…VYPPYLNYLR (93 aa)) are AF1; mediates transcriptional activation. Residue Lys-533 forms a Glycyl lysine isopeptide (Lys-Gly) (interchain with G-Cter in SUMO) linkage. NR C4-type zinc fingers lie at residues 569 to 589 (CLIC…CGSC) and 605 to 629 (CAGR…LRKC). A DNA-binding region (nuclear receptor) is located at residues 569–641 (CLICGDEASG…AGMVLGGRKF (73 aa)). Residue Ser-678 is modified to Phosphoserine. The region spanning 681 to 915 (QDIQLIPPLI…EFPEMMSEVI (235 aa)) is the NR LBD domain. An AF2; mediates transcriptional activation region spans residues 689–935 (LINLLVSIEP…MVKPLLFHKK (247 aa)). Arg-768 is a progesterone binding site.

The protein belongs to the nuclear hormone receptor family. As to quaternary structure, interacts with SMARD1 and UNC45A. Interacts with CUEDC2; the interaction promotes ubiquitination, decreases sumoylation, and represses transcriptional activity. Interacts with PIAS3; the interaction promotes sumoylation of PR in a hormone-dependent manner, inhibits DNA-binding, and alters nuclear export. Interacts with SP1; the interaction requires ligand-induced phosphorylation on Ser-345 by ERK1/2-MAPK. Interacts with PRMT2. Interacts with NCOA2 and NCOA1. Interacts with KLF9. Interacts with GTF2B. In terms of processing, phosphorylated on multiple serine sites. Several of these sites are hormone-dependent. Phosphorylation on Ser-294 is highly hormone-dependent and modulates ubiquitination and sumoylation on Lys-388. Phosphorylation on Ser-345 also requires induction by hormone. Basal phosphorylation on Ser-81, Ser-162, Ser-190 and Ser-400 is increased in response to progesterone and can be phosphorylated in vitro by the CDK2-A1 complex. Increased levels of phosphorylation on Ser-400 also in the presence of EGF, heregulin, IGF, PMA and FBS. Phosphorylation at this site by CDK2 is ligand-independent, and increases nuclear translocation and transcriptional activity. Phosphorylation at Ser-162 and Ser-294, but not at Ser-190, is impaired during the G(2)/M phase of the cell cycle. Phosphorylation on Ser-345 by ERK1/2 MAPK is required for interaction with SP1. Sumoylation is hormone-dependent and represses transcriptional activity. Sumoylation on all three sites is enhanced by PIAS3. Desumoylated by SENP1. Sumoylation on Lys-388, the main site of sumoylation, is repressed by ubiquitination on the same site, and modulated by phosphorylation at Ser-294. Post-translationally, ubiquitination is hormone-dependent and represses sumoylation on the same site. Promoted by MAPK-mediated phosphorylation on Ser-294. Ubiquitinated by UBR5, leading to its degradation: UBR5 specifically recognizes and binds ligand-bound PGR when it is not associated with coactivators (NCOAs). In presence of NCOAs, the UBR5-degron is not accessible, preventing its ubiquitination and degradation. In terms of processing, palmitoylated by ZDHHC7 and ZDHHC21. Palmitoylation is required for plasma membrane targeting and for rapid intracellular signaling via ERK and AKT kinases and cAMP generation.

The protein localises to the nucleus. Its subcellular location is the cytoplasm. Its function is as follows. The steroid hormones and their receptors are involved in the regulation of eukaryotic gene expression and affect cellular proliferation and differentiation in target tissues. Transcriptional activator of several progesteron-dependent promoters in a variety of cell types. Involved in activation of SRC-dependent MAPK signaling on hormone stimulation. This chain is Progesterone receptor (PGR), found in Macaca sylvanus (Barbary macaque).